The primary structure comprises 125 residues: UPF0251 protein DSY3441 (125 aa).

The protein belongs to the UPF0251 family.

This chain is UPF0251 protein DSY3441, found in Desulfitobacterium hafniense (strain Y51).